Here is a 472-residue protein sequence, read N- to C-terminus: ATP synthase subunit beta (472 aa).

160-167 contributes to the ATP binding site; sequence GGAGVGKT.

This sequence belongs to the ATPase alpha/beta chains family. F-type ATPases have 2 components, CF(1) - the catalytic core - and CF(0) - the membrane proton channel. CF(1) has five subunits: alpha(3), beta(3), gamma(1), delta(1), epsilon(1). CF(0) has three main subunits: a(1), b(2) and c(9-12). The alpha and beta chains form an alternating ring which encloses part of the gamma chain. CF(1) is attached to CF(0) by a central stalk formed by the gamma and epsilon chains, while a peripheral stalk is formed by the delta and b chains.

The protein localises to the cell membrane. The catalysed reaction is ATP + H2O + 4 H(+)(in) = ADP + phosphate + 5 H(+)(out). Functionally, produces ATP from ADP in the presence of a proton gradient across the membrane. The catalytic sites are hosted primarily by the beta subunits. This is ATP synthase subunit beta from Lachnoclostridium phytofermentans (strain ATCC 700394 / DSM 18823 / ISDg) (Clostridium phytofermentans).